Reading from the N-terminus, the 120-residue chain is Large ribosomal subunit protein uL18 (120 aa).

The protein belongs to the universal ribosomal protein uL18 family. In terms of assembly, part of the 50S ribosomal subunit; part of the 5S rRNA/L5/L18/L25 subcomplex. Contacts the 5S and 23S rRNAs.

Functionally, this is one of the proteins that bind and probably mediate the attachment of the 5S RNA into the large ribosomal subunit, where it forms part of the central protuberance. This chain is Large ribosomal subunit protein uL18, found in Bradyrhizobium sp. (strain ORS 278).